A 608-amino-acid polypeptide reads, in one-letter code: MQWLSVCSLLVLLSVLSRSQAQNQICTIFTEAKEDGFKSLILVGLAQNLPDSTLGDLVPLIAEALAMGVKCCSDTPPEDCERDVADLFQSAVCSSETLVEKNDLKMCCEKTAAERTHCFVDHKAKIPRDLSLKAELPAADQCEDFKKDHKAFVGRFIFKFSKSNPMLPPHVVLAIAKGYGEVLTTCCGEAEAQTCFDTKKATFQHAVMKRVAELRSLCIVHKKYGDRVVKAKKLVQYSQKMPQASFQEMGGMVDKIVATVAPCCSGDMVTCMKERKTLVDEVCADESVLSRAAGLSACCKEDAVHRGSCVEAMKPDPKPDGLSEHYDIHADIAAVCQTFTKTPDVAMGKLVYEISVRHPESSQQVILRFAKEAEQALLQCCDMEDHAECVKTALAGSDIDKKITDETDYYKKMCAAEAAVSDDSFEKSMMVYYTRIMPQASFDQLHMVSETVHDVLHACCKDEQGHFVLPCAEEKLTDAIDATCDDYDPSSINPHIAHCCNQSYSMRRHCILAIQPDTEFTPPELDASSFHMGPELCTKDSKDLLLSGKKLLYGVVRHKTTITEDHLKTISTKYHTMKEKCCAAEDQAACFTEEAPKLVSESAELVKV.

A signal peptide spans 1 to 14 (MQWLSVCSLLVLLS). The propeptide occupies 15 to 18 (VLSR). Albumin domains lie at 19–205 (SQAQ…TFQH), 206–398 (AVMK…AGSD), and 402–600 (KITD…KLVS). Intrachain disulfides connect C26/C72, C71/C80, C93/C108, C107/C118, C142/C187, C186/C195, C218/C264, C263/C271, C283/C299, C298/C309, C336/C381, C380/C389, C414/C460, C459/C471, C484/C500, C499/C510, C537/C582, and C581/C590. A glycan (N-linked (GlcNAc...) asparagine) is linked at N501.

It belongs to the ALB/AFP/VDB family. In terms of tissue distribution, plasma.

It localises to the secreted. Functionally, binds water, Ca(2+), Na(+), K(+), fatty acids, hormones, bilirubin and drugs. Its main function is the regulation of the colloidal osmotic pressure of blood. The sequence is that of Albumin 1 (alb1) from Salmo salar (Atlantic salmon).